A 251-amino-acid chain; its full sequence is Azurocidin (251 aa).

The N-terminal stretch at 1-19 is a signal peptide; the sequence is MTRLTVLALLAGLLASSRA. A propeptide spans 20-26 (removed in mature form); that stretch reads GSSPLLD. A propeptide spans 25 to 26 (dipeptide found in non-mature form); that stretch reads LD. The Peptidase S1 domain maps to 27–244; that stretch reads IVGGRKARPR…FRDWIDGVLN (218 aa). A possesses antibiotic activity region spans residues 46-70; the sequence is NQGRHFCGGALIHARFVMTAASCFQ. A disulfide bond links Cys-52 and Cys-68. A glycan (N-linked (GlcNAc...) asparagine; partial) is linked at Asn-126. Asn-140 carries N-linked (GlcNAc...) asparagine glycosylation. Disulfide bonds link Cys-149–Cys-207, Cys-180–Cys-186, and Cys-197–Cys-222. Asn-171 carries N-linked (GlcNAc...) asparagine; partial glycosylation. Residues 249 to 251 constitute a propeptide, removed in mature form; that stretch reads GPA.

This sequence belongs to the peptidase S1 family. Elastase subfamily. Cleavage of the N-terminal propeptide which is composed of 7 amino acids occurs in two steps. The initial cleavage of 5 amino acids is followed by the cleavage of a dipeptide to produce the mature form.

The protein localises to the cytoplasmic granule membrane. In terms of biological role, this is a neutrophil granule-derived antibacterial and monocyte- and fibroblast-specific chemotactic glycoprotein. Binds heparin. The cytotoxic action is limited to many species of Gram-negative bacteria; this specificity may be explained by a strong affinity of the very basic N-terminal half for the negatively charged lipopolysaccharides that are unique to the Gram-negative bacterial outer envelope. It may play a role in mediating recruitment of monocytes in the second wave of inflammation. Has antibacterial activity against the Gram-negative bacterium P.aeruginosa, this activity is inhibited by LPS from P.aeruginosa. Acting alone, it does not have antimicrobial activity against the Gram-negative bacteria A.actinomycetemcomitans ATCC 29532, A.actinomycetemcomitans NCTC 9709, A.actinomycetemcomitans FDC-Y4, H.aphrophilus ATCC 13252, E.corrodens ATCC 23834, C.sputigena ATCC 33123, Capnocytophaga sp ATCC 33124, Capnocytophaga sp ATCC 27872 or E.coli ML-35. Has antibacterial activity against C.sputigena ATCC 33123 when acting synergistically with either elastase or cathepsin G. This chain is Azurocidin, found in Homo sapiens (Human).